Consider the following 110-residue polypeptide: Large ribosomal subunit protein uL22 (110 aa).

The protein belongs to the universal ribosomal protein uL22 family. Part of the 50S ribosomal subunit.

Its function is as follows. This protein binds specifically to 23S rRNA; its binding is stimulated by other ribosomal proteins, e.g. L4, L17, and L20. It is important during the early stages of 50S assembly. It makes multiple contacts with different domains of the 23S rRNA in the assembled 50S subunit and ribosome. In terms of biological role, the globular domain of the protein is located near the polypeptide exit tunnel on the outside of the subunit, while an extended beta-hairpin is found that lines the wall of the exit tunnel in the center of the 70S ribosome. In Baumannia cicadellinicola subsp. Homalodisca coagulata, this protein is Large ribosomal subunit protein uL22.